Consider the following 87-residue polypeptide: Phospholemman (87 aa).

An N-terminal signal peptide occupies residues 1–20; the sequence is MASLSHILVLWVGILTVVNA. Topologically, residues 21–35 are extracellular; the sequence is EAPQEHDPFTYDYQS. The chain crosses the membrane as a helical span at residues 36 to 56; sequence LRIGGLIIAGILFILGILIVL. Residues 57 to 87 lie on the Cytoplasmic side of the membrane; sequence SRRCRCKFNQQQSLGKMRSPHLAAQFSSESC. Residue C60 is the site of S-palmitoyl cysteine attachment. Residue C62 is modified to S-glutathionyl cysteine; alternate. The S-palmitoyl cysteine; alternate moiety is linked to residue C62. S75 is subject to Phosphoserine; by PKA and PKC. S83 carries the post-translational modification Phosphoserine; by PKA.

Belongs to the FXYD family. Homotetramer. Monomer. Regulatory subunit of the sodium/potassium-transporting ATPase (NKA) which is composed of a catalytic alpha subunit, a non-catalytic beta subunit and an additional regulatory subunit. The monomeric form associates with NKA while the oligomeric form does not. Interacts with the catalytic alpha-1 subunit ATP1A1. Also interacts with the catalytic alpha-2 and alpha-3 subunits ATP1A2 and ATP1A3. Very little interaction with ATP1A1, ATP1A2 or ATP1A3 when phosphorylated at Ser-83. Interacts with the non-catalytic beta-1 subunit ATP1B1. Oxidative stress decreases interaction with ATP1A1 but increases interaction with ATP1B1. Post-translationally, major plasma membrane substrate for cAMP-dependent protein kinase (PKA) and protein kinase C (PKC) in several different tissues. Phosphorylated in response to insulin and adrenergic stimulation. Phosphorylation at Ser-83 stimulates sodium/potassium-transporting ATPase activity while the unphosphorylated form inhibits sodium/potassium-transporting ATPase activity. Phosphorylation increases tetramerization, decreases binding to ATP1A1 and reduces inhibition of ATP1A1 activity. Phosphorylation at Ser-75 leads to greatly reduced interaction with ATP1A1, ATP1A2 and ATP1A3. May be phosphorylated by DMPK. Palmitoylation increases half-life and stability and is enhanced upon phosphorylation at Ser-83 by PKA.

It localises to the cell membrane. Its subcellular location is the sarcolemma. The protein resides in the apical cell membrane. It is found in the membrane. The protein localises to the caveola. It localises to the T-tubule. Functionally, associates with and regulates the activity of the sodium/potassium-transporting ATPase (NKA) which transports Na(+) out of the cell and K(+) into the cell. Inhibits NKA activity in its unphosphorylated state and stimulates activity when phosphorylated. Reduces glutathionylation of the NKA beta-1 subunit ATP1B1, thus reversing glutathionylation-mediated inhibition of ATP1B1. Contributes to female sexual development by maintaining the excitability of neurons which secrete gonadotropin-releasing hormone. In Sus scrofa (Pig), this protein is Phospholemman.